The chain runs to 242 residues: Uridylate kinase (242 aa).

12–15 (KLSG) lines the ATP pocket. Positions 20–25 (GEKGYG) are involved in allosteric activation by GTP. G55 is a binding site for UMP. ATP contacts are provided by G56 and R60. Residues D75 and 136–143 (TGNPYFST) each bind UMP. Residues Y169 and D172 each contribute to the ATP site.

Belongs to the UMP kinase family. Homohexamer.

It localises to the cytoplasm. The catalysed reaction is UMP + ATP = UDP + ADP. It functions in the pathway pyrimidine metabolism; CTP biosynthesis via de novo pathway; UDP from UMP (UMPK route): step 1/1. With respect to regulation, allosterically activated by GTP. Inhibited by UTP. In terms of biological role, catalyzes the reversible phosphorylation of UMP to UDP. This is Uridylate kinase from Carboxydothermus hydrogenoformans (strain ATCC BAA-161 / DSM 6008 / Z-2901).